Consider the following 918-residue polypeptide: Isoleucine--tRNA ligase 1 (918 aa).

The 'HIGH' region signature appears at 57–67 (PYANGDIHIGH). Position 553 (Glu-553) interacts with L-isoleucyl-5'-AMP. The 'KMSKS' region motif lies at 594–598 (KMSKS). Residue Lys-597 participates in ATP binding. Cys-885, Cys-888, Cys-905, and Cys-908 together coordinate Zn(2+).

The protein belongs to the class-I aminoacyl-tRNA synthetase family. IleS type 1 subfamily. As to quaternary structure, monomer. Zn(2+) is required as a cofactor.

It localises to the cytoplasm. The enzyme catalyses tRNA(Ile) + L-isoleucine + ATP = L-isoleucyl-tRNA(Ile) + AMP + diphosphate. In terms of biological role, catalyzes the attachment of isoleucine to tRNA(Ile). As IleRS can inadvertently accommodate and process structurally similar amino acids such as valine, to avoid such errors it has two additional distinct tRNA(Ile)-dependent editing activities. One activity is designated as 'pretransfer' editing and involves the hydrolysis of activated Val-AMP. The other activity is designated 'posttransfer' editing and involves deacylation of mischarged Val-tRNA(Ile). The protein is Isoleucine--tRNA ligase 1 of Oceanobacillus iheyensis (strain DSM 14371 / CIP 107618 / JCM 11309 / KCTC 3954 / HTE831).